The following is a 271-amino-acid chain: 3-methyl-2-oxobutanoate hydroxymethyltransferase (271 aa).

2 residues coordinate Mg(2+): aspartate 51 and aspartate 90. Residues 51–52 (DS), aspartate 90, and lysine 118 contribute to the 3-methyl-2-oxobutanoate site. Residue glutamate 120 coordinates Mg(2+). The active-site Proton acceptor is glutamate 186.

This sequence belongs to the PanB family. As to quaternary structure, homodecamer; pentamer of dimers. It depends on Mg(2+) as a cofactor.

It is found in the cytoplasm. The catalysed reaction is 3-methyl-2-oxobutanoate + (6R)-5,10-methylene-5,6,7,8-tetrahydrofolate + H2O = 2-dehydropantoate + (6S)-5,6,7,8-tetrahydrofolate. It functions in the pathway cofactor biosynthesis; (R)-pantothenate biosynthesis; (R)-pantoate from 3-methyl-2-oxobutanoate: step 1/2. Functionally, catalyzes the reversible reaction in which hydroxymethyl group from 5,10-methylenetetrahydrofolate is transferred onto alpha-ketoisovalerate to form ketopantoate. The protein is 3-methyl-2-oxobutanoate hydroxymethyltransferase of Xanthomonas campestris pv. campestris (strain 8004).